The chain runs to 343 residues: Nicotianamine synthase 3 (343 aa).

The protein belongs to the nicotianamine synthase (NAS)-like family. In terms of tissue distribution, expressed in leaves.

The catalysed reaction is 3 S-adenosyl-L-methionine = nicotianamine + 3 S-methyl-5'-thioadenosine + 3 H(+). Functionally, synthesizes nicotianamine, a polyamine that is the first intermediate in the synthesis of the phytosiderophores of the mugineic acid type found in gramineae which serve as a sensor for the physiological iron status within the plant, and/or might be involved in the transport of iron. In Oryza sativa subsp. indica (Rice), this protein is Nicotianamine synthase 3 (NAS3).